The following is a 588-amino-acid chain: Polyphenol oxidase II, chloroplastic (588 aa).

Residues 1 to 10 (MASFTTSPCT) are compositionally biased toward polar residues. The interval 1-32 (MASFTTSPCTSAAPKTPKSLSSSATISSPLPK) is disordered. Residues 1-50 (MASFTTSPCTSAAPKTPKSLSSSATISSPLPKPSQIHIATAKRTHHFKVS) constitute a chloroplast transit peptide. The span at 16–29 (TPKSLSSSATISSP) shows a compositional bias: low complexity. The N-terminal 38 residues, 51-88 (CNAPNGDSQPKLDRRDVLLGLGGLAGAASLINNPLAFA), are a transit peptide targeting the thylakoid. 2 cysteine pairs are disulfide-bonded: C99–C116 and C115–C179. The Cu cation site is built by H178, H199, H208, H330, H334, and H366. The 2'-(S-cysteinyl)-histidine (Cys-His) cross-link spans 182 to 199 (CNGGYVQTDYPDKEIQVH).

It belongs to the tyrosinase family. As to quaternary structure, monomer. It depends on Cu(2+) as a cofactor.

Its subcellular location is the plastid. The protein localises to the chloroplast thylakoid lumen. It catalyses the reaction 2 catechol + O2 = 2 1,2-benzoquinone + 2 H2O. Catalyzes the oxidation of mono- and o-diphenols to o-diquinones. The sequence is that of Polyphenol oxidase II, chloroplastic (co-2) from Ipomoea batatas (Sweet potato).